The primary structure comprises 150 residues: Arginine repressor (150 aa).

It belongs to the ArgR family.

It is found in the cytoplasm. Its pathway is amino-acid biosynthesis; L-arginine biosynthesis [regulation]. In terms of biological role, regulates arginine biosynthesis genes. In Halothermothrix orenii (strain H 168 / OCM 544 / DSM 9562), this protein is Arginine repressor.